Reading from the N-terminus, the 77-residue chain is Small ribosomal subunit protein bS20 (77 aa).

It belongs to the bacterial ribosomal protein bS20 family.

Binds directly to 16S ribosomal RNA. This chain is Small ribosomal subunit protein bS20, found in Lactococcus lactis subsp. cremoris (strain MG1363).